We begin with the raw amino-acid sequence, 341 residues long: MVSSQPKYDLIREVGRGSYGVVYEAVIRKTSARVAVKKIRCHAPENVELALREFWALSSIKSQHPNVIHLEECILQKDGMVQKMSHGSNSSLYLQLVETSLKGEIAFDPRSAYYLWFVMDFCDGGDMNEYLLSRKPNRKTNTSFMLQLSSALAFLHKNQIIHRDLKPDNILISQTRLDTSDLEPTLKVADFGLSKVCSASGQNPEEPVSVNKCFLSTACGTDFYMAPEVWEGHYTAKADIFALGIIIWAMLERITFIDTETKKELLGSYVKQGTEIVPVGEALLENPKMELLIPVKKKSMNGRMKQLIKEMLAANPQDRPDAFELELRLVQIAFKDSSWET.

The region spanning 8–334 is the Protein kinase domain; sequence YDLIREVGRG…LELRLVQIAF (327 aa). Residues 14–22 and Lys-37 contribute to the ATP site; that span reads VGRGSYGVV. Asp-164 (proton acceptor) is an active-site residue.

The protein belongs to the protein kinase superfamily. Ser/Thr protein kinase family. As to expression, expressed in liver, kidney, pancreas, spleen, thymus and prostate.

The protein localises to the nucleus. It catalyses the reaction L-seryl-[protein] + ATP = O-phospho-L-seryl-[protein] + ADP + H(+). The enzyme catalyses L-threonyl-[protein] + ATP = O-phospho-L-threonyl-[protein] + ADP + H(+). In Homo sapiens (Human), this protein is Serine/threonine-protein kinase PDIK1L (PDIK1L).